The sequence spans 319 residues: uncharacterized protein (319 aa).

The span at 268–312 shows a compositional bias: low complexity; the sequence is SSVVAVTHPPSTTSTTTSVSETLSSFIAPSDLSSQPSPSSHPSSP. The segment at 268–319 is disordered; that stretch reads SSVVAVTHPPSTTSTTTSVSETLSSFIAPSDLSSQPSPSSHPSSPFGNHNEF.

This is an uncharacterized protein from Lepidoptera (butterflies and moths).